Here is a 300-residue protein sequence, read N- to C-terminus: Small ribosomal subunit protein uS2 (300 aa).

Positions 269–300 (WEADGADWAASSAAAPAESWAAEAQGAEGAKW) are disordered.

It belongs to the universal ribosomal protein uS2 family. In terms of assembly, component of the small ribosomal subunit. Mature ribosomes consist of a small (40S) and a large (60S) subunit. The 40S subunit contains about 33 different proteins and 1 molecule of RNA (18S). The 60S subunit contains about 49 different proteins and 3 molecules of RNA (25S, 5.8S and 5S). Interacts with rps21.

It is found in the cytoplasm. Its function is as follows. Required for the assembly and/or stability of the 40S ribosomal subunit. Required for the processing of the 20S rRNA-precursor to mature 18S rRNA in a late step of the maturation of 40S ribosomal subunits. The polypeptide is Small ribosomal subunit protein uS2 (rps0) (Aspergillus terreus (strain NIH 2624 / FGSC A1156)).